The following is a 220-amino-acid chain: Ribonuclease HII (220 aa).

In terms of domain architecture, RNase H type-2 spans M1–K219. 3 residues coordinate a divalent metal cation: D7, E8, and D105.

This sequence belongs to the RNase HII family. It depends on Mn(2+) as a cofactor. Mg(2+) serves as cofactor.

The protein resides in the cytoplasm. It catalyses the reaction Endonucleolytic cleavage to 5'-phosphomonoester.. Functionally, endonuclease that specifically degrades the RNA of RNA-DNA hybrids. The protein is Ribonuclease HII of Methanosarcina mazei (strain ATCC BAA-159 / DSM 3647 / Goe1 / Go1 / JCM 11833 / OCM 88) (Methanosarcina frisia).